We begin with the raw amino-acid sequence, 394 residues long: Transcriptional regulator Myc-1 (394 aa).

Thr58 carries an O-linked (GlcNAc) threonine glycan. The 9aaTAD signature appears at 76–84; it reads EMVSEFLGD. 2 disordered regions span residues 177–247 and 283–318; these read SGKS…SRYP and EASS…HNVL. Over residues 205–226 the composition is skewed to acidic residues; sequence DSEEEEEEEEEEEEEEEEEEID. Over residues 229 to 238 the composition is skewed to basic and acidic residues; that stretch reads TVEKRQKKNE. Residues 310–362 form the bHLH domain; the sequence is DKRRTHNVLERQRRNELKLSFFALRDEIPDVANNEKAAKVVILKKATECIHSM. A leucine-zipper region spans residues 369–390; sequence LLSIKEQLRRKSEQLKHRLQLL.

Efficient DNA binding requires dimerization with another bHLH protein. Binds DNA as a heterodimer with MAX.

Its subcellular location is the nucleus. Transcription factor that binds DNA in a non-specific manner, yet also specifically recognizes the core sequence 5'-CAC[GA]TG-3'. Activates the transcription of growth-related genes. This chain is Transcriptional regulator Myc-1 (myca), found in Cyprinus carpio (Common carp).